The chain runs to 454 residues: Pup--protein ligase (454 aa).

Glutamate 9 serves as a coordination point for Mg(2+). Arginine 53 is a binding site for ATP. Mg(2+) is bound at residue tyrosine 55. Aspartate 57 serves as the catalytic Proton acceptor. A Mg(2+)-binding site is contributed by glutamate 63. 2 residues coordinate ATP: threonine 66 and tryptophan 420.

This sequence belongs to the Pup ligase/Pup deamidase family. Pup-conjugating enzyme subfamily.

The catalysed reaction is ATP + [prokaryotic ubiquitin-like protein]-L-glutamate + [protein]-L-lysine = ADP + phosphate + N(6)-([prokaryotic ubiquitin-like protein]-gamma-L-glutamyl)-[protein]-L-lysine.. It participates in protein degradation; proteasomal Pup-dependent pathway. Its pathway is protein modification; protein pupylation. Functionally, catalyzes the covalent attachment of the prokaryotic ubiquitin-like protein modifier Pup to the proteasomal substrate proteins, thereby targeting them for proteasomal degradation. This tagging system is termed pupylation. The ligation reaction involves the side-chain carboxylate of the C-terminal glutamate of Pup and the side-chain amino group of a substrate lysine. The protein is Pup--protein ligase of Pseudarthrobacter chlorophenolicus (strain ATCC 700700 / DSM 12829 / CIP 107037 / JCM 12360 / KCTC 9906 / NCIMB 13794 / A6) (Arthrobacter chlorophenolicus).